The primary structure comprises 585 residues: Pyruvate kinase (585 aa).

Arg-32 provides a ligand contact to substrate. K(+)-binding residues include Asn-34, Ser-36, Asp-66, and Thr-67. Asn-34 to His-37 lines the ATP pocket. Residues Arg-73 and Lys-156 each contribute to the ATP site. A Mg(2+)-binding site is contributed by Glu-222. Gly-245, Asp-246, and Thr-278 together coordinate substrate. Asp-246 contributes to the Mg(2+) binding site.

Belongs to the pyruvate kinase family. The protein in the C-terminal section; belongs to the PEP-utilizing enzyme family. Homotetramer. Requires Mg(2+) as cofactor. The cofactor is K(+).

The catalysed reaction is pyruvate + ATP = phosphoenolpyruvate + ADP + H(+). The protein operates within carbohydrate degradation; glycolysis; pyruvate from D-glyceraldehyde 3-phosphate: step 5/5. This chain is Pyruvate kinase (pyk), found in Bacillus licheniformis.